We begin with the raw amino-acid sequence, 1040 residues long: Eukaryotic translation initiation factor 3 subunit A (1040 aa).

Residues 92-121 adopt a coiled-coil conformation; the sequence is LKKFIELAEKKVTEAQTKADEIQSSLESAA. The PCI domain maps to 339–523; sequence MTKAASFVLL…GVLTFDSDVF (185 aa). The stretch at 608 to 906 forms a coiled coil; sequence RVIIEKKKEA…AEARRAARKA (299 aa). Basic and acidic residues-rich tracts occupy residues 617–632 and 795–901; these read AATDALQRKQREEETR and EVSE…EARR. 2 disordered regions span residues 617–641 and 795–1040; these read AATDALQRKQREEETRKRIRTQQLQ and EVSE…QQNQ. 4 stretches are compositionally biased toward low complexity: residues 908–917, 945–955, 978–993, and 1004–1018; these read LEPAAPAARP, KEAAGGAAPEA, SGSSAAPAAPPSNGAP, and SSSSQPPSRTQTPGS.

This sequence belongs to the eIF-3 subunit A family. In terms of assembly, component of the eukaryotic translation initiation factor 3 (eIF-3) complex.

Its subcellular location is the cytoplasm. In terms of biological role, RNA-binding component of the eukaryotic translation initiation factor 3 (eIF-3) complex, which is involved in protein synthesis of a specialized repertoire of mRNAs and, together with other initiation factors, stimulates binding of mRNA and methionyl-tRNAi to the 40S ribosome. The eIF-3 complex specifically targets and initiates translation of a subset of mRNAs involved in cell proliferation. This Aspergillus terreus (strain NIH 2624 / FGSC A1156) protein is Eukaryotic translation initiation factor 3 subunit A (tif32).